The primary structure comprises 142 residues: Large ribosomal subunit protein uL11 (142 aa).

The protein belongs to the universal ribosomal protein uL11 family. In terms of assembly, part of the ribosomal stalk of the 50S ribosomal subunit. Interacts with L10 and the large rRNA to form the base of the stalk. L10 forms an elongated spine to which L12 dimers bind in a sequential fashion forming a multimeric L10(L12)X complex. In terms of processing, one or more lysine residues are methylated.

Functionally, forms part of the ribosomal stalk which helps the ribosome interact with GTP-bound translation factors. This Haemophilus ducreyi (strain 35000HP / ATCC 700724) protein is Large ribosomal subunit protein uL11.